The primary structure comprises 560 residues: Aluminum-activated malate transporter 12 (560 aa).

The next 6 membrane-spanning stretches (helical) occupy residues valine 54–isoleucine 74, alanine 78–cysteine 98, glycine 104–serine 124, alanine 130–isoleucine 150, asparagine 156–tyrosine 176, and phenylalanine 189–isoleucine 209. The interval leucine 386–leucine 421 is disordered. Residues asparagine 407–leucine 421 show a composition bias toward polar residues.

Belongs to the aromatic acid exporter (TC 2.A.85) family. As to expression, expressed in roots, stems, leaves, flowers and pollen. Mainly detected in the roots vascular stele and in the leaves guard cells.

The protein resides in the cell membrane. Malate-sensitive anion transporter permeable to chloride, nitrate, sulfate and malate. Involved in dark-, CO(2)-, abscisic acid- and water-deficient-induced stomatal closure. Belongs to the R-type anion channels. This chain is Aluminum-activated malate transporter 12 (ALMT12), found in Arabidopsis thaliana (Mouse-ear cress).